The chain runs to 364 residues: Developmentally-regulated GTP-binding protein 2 homolog (364 aa).

In terms of domain architecture, OBG-type G spans 63–288; the sequence is ARVALIGFPS…LLDKIWDYLN (226 aa). Residues 69–76, 115–119, and 246–249 contribute to the GTP site; these read GFPSVGKS, DTPGI, and NKMD. Positions 288-363 constitute a TGS domain; sequence NLVRVYTKLR…EDEDVIQIVK (76 aa).

It belongs to the TRAFAC class OBG-HflX-like GTPase superfamily. OBG GTPase family.

The protein is Developmentally-regulated GTP-binding protein 2 homolog (drg2) of Dictyostelium discoideum (Social amoeba).